A 94-amino-acid polypeptide reads, in one-letter code: PqqA binding protein (94 aa).

Belongs to the PqqD family. In terms of assembly, monomer. Interacts with PqqE.

It functions in the pathway cofactor biosynthesis; pyrroloquinoline quinone biosynthesis. Functionally, functions as a PqqA binding protein and presents PqqA to PqqE, in the pyrroloquinoline quinone (PQQ) biosynthetic pathway. This chain is PqqA binding protein, found in Acinetobacter baumannii (strain AB307-0294).